We begin with the raw amino-acid sequence, 395 residues long: Protein PELOTA 2 (395 aa).

Belongs to the eukaryotic release factor 1 family. Pelota subfamily. The cofactor is a divalent metal cation.

Its subcellular location is the cytoplasm. It localises to the nucleus. Component of the Pelota-HBS1L complex, a complex that recognizes stalled ribosomes and triggers the No-Go Decay (NGD) pathway. In the Pelota-HBS1L complex, pelo recognizes ribosomes stalled at the 3' end of an mRNA and engages stalled ribosomes by destabilizing mRNA in the mRNA channel. Following ribosome-binding, the Pelota-HBS1L complex promotes the disassembly of stalled ribosomes, followed by degradation of damaged mRNAs as part of the NGD pathway. The polypeptide is Protein PELOTA 2 (PEL2) (Arabidopsis thaliana (Mouse-ear cress)).